The primary structure comprises 182 residues: Probable RNA 2'-phosphotransferase (182 aa).

The protein belongs to the KptA/TPT1 family.

Functionally, removes the 2'-phosphate from RNA via an intermediate in which the phosphate is ADP-ribosylated by NAD followed by a presumed transesterification to release the RNA and generate ADP-ribose 1''-2''-cyclic phosphate (APPR&gt;P). May function as an ADP-ribosylase. In Pseudomonas paraeruginosa (strain DSM 24068 / PA7) (Pseudomonas aeruginosa (strain PA7)), this protein is Probable RNA 2'-phosphotransferase.